Reading from the N-terminus, the 245-residue chain is tRNA pseudouridine synthase A (245 aa).

Asp52 acts as the Nucleophile in catalysis. Residue Tyr111 coordinates substrate.

The protein belongs to the tRNA pseudouridine synthase TruA family. As to quaternary structure, homodimer.

The catalysed reaction is uridine(38/39/40) in tRNA = pseudouridine(38/39/40) in tRNA. Formation of pseudouridine at positions 38, 39 and 40 in the anticodon stem and loop of transfer RNAs. The polypeptide is tRNA pseudouridine synthase A (Nitrobacter hamburgensis (strain DSM 10229 / NCIMB 13809 / X14)).